The sequence spans 360 residues: MKTSFGLLALAAAAKLVNAHATVFAVWINDEDQGLGNTADGYIRSPPNNSPVTDVTSKDMTCNVNGATAAAKTLDVKAGDKITFEWHHNSRDASDDIIASSHLGPVMVYMAPTEKGSAGSGWVKIAEDGYSNGKWAVDTLIANRGKHSITVPDVPAGEYLFRPEIIALHEGNREGGAQLYMECVQVKVTSDGSKTLPEGVSIPGTYTATDPGILFDIYNSFDSYPIPGPAVWDGSSSGSSSGSSKTTAAAPAATSAASASSTKAPATTAAPVQTESAKPATSTTQAAAPTTLVTSAKPTATATAGAGDSGSGSCSATAPATGVVKMYAQCGGMNYSGSTTCESGLTCKQWNPYYHQCVKA.

A signal peptide spans Met-1–Ala-19. Cu(2+) contacts are provided by His-20 and His-102. An intrachain disulfide couples Cys-62 to Cys-183. O2 is bound at residue His-169. Tyr-180 contributes to the Cu(2+) binding site. Residues Thr-254–Val-293 form a disordered region. In terms of domain architecture, CBM1 spans Gly-322 to Val-358. N-linked (GlcNAc...) asparagine glycosylation is present at Asn-334.

It belongs to the polysaccharide monooxygenase AA9 family. Cu(2+) serves as cofactor.

It localises to the secreted. It catalyses the reaction [(1-&gt;4)-beta-D-glucosyl]n+m + reduced acceptor + O2 = 4-dehydro-beta-D-glucosyl-[(1-&gt;4)-beta-D-glucosyl]n-1 + [(1-&gt;4)-beta-D-glucosyl]m + acceptor + H2O.. In terms of biological role, lytic polysaccharide monooxygenase (LPMO) that depolymerizes crystalline and amorphous polysaccharides via the oxidation of scissile alpha- or beta-(1-4)-glycosidic bonds, yielding C4 oxidation products. Catalysis by LPMOs requires the reduction of the active-site copper from Cu(II) to Cu(I) by a reducing agent and H(2)O(2) or O(2) as a cosubstrate. In Aspergillus terreus (strain NIH 2624 / FGSC A1156), this protein is AA9 family lytic polysaccharide monooxygenase A (eglD).